The chain runs to 622 residues: Leucine-rich repeat protein soc-2 homolog (622 aa).

The segment covering 1-30 (MNLCSSSGATASNTSLSSTGHPESNGSGPS) has biased composition (polar residues). A disordered region spans residues 1–117 (MNLCSSSGAT…HPESNKPKPT (117 aa)). Composition is skewed to gly residues over residues 36-52 (FGGG…GGSG) and 64-75 (LNGGGSGGGGGA). Polar residues predominate over residues 85–94 (LTHNNENNGN). LRR repeat units lie at residues 142–163 (GIKR…VREC), 165–186 (HLTE…IGCL), 188–209 (NLRN…LKHC), 211–232 (QLKV…IYRL), 234–255 (SLTT…LRQL), 257–278 (NLTM…IGAL), 280–301 (NLTT…IGNC), 303–324 (NLSA…IGNL), 326–348 (SLVR…KNCK), 349–370 (SMDE…MLAS), 373–394 (ALTS…GPAQ), 397–418 (NVYS…IFSR), 421–442 (GLTK…VGTW), 444–465 (NMVE…IMNL), 467–488 (NLEI…IGNL), 490–511 (KLRI…IGLL), 513–534 (ELQR…VGHL), 536–557 (NLTH…IGSL), 559–581 (SLEN…LALC), and 583–604 (NLKY…IQAG).

This sequence belongs to the SHOC2 family.

Functionally, acts as a Ras effector and participates in MAPK pathway activation. Probably acts as a regulatory subunit of protein phosphatase that specifically dephosphorylates Raf kinase and stimulate Raf activity at specialized signaling complexes upon Ras activation. The protein is Leucine-rich repeat protein soc-2 homolog (Sur-8) of Drosophila grimshawi (Hawaiian fruit fly).